We begin with the raw amino-acid sequence, 507 residues long: Cell cycle serine/threonine-protein kinase hsk1 (507 aa).

Ser-22 bears the Phosphoserine mark. Residues 68 to 433 (YRLIEKIGEG…AEEALDHDFL (366 aa)) enclose the Protein kinase domain. ATP-binding positions include 74–82 (IGEGTFSSV) and Lys-129. Asp-216 (proton acceptor) is an active-site residue. Thr-291 is subject to Phosphothreonine. Positions 475 to 507 (FKEQEETDEPTSLSKRKRSIDEILPNDALQDGA) are disordered. Residue Ser-493 is modified to Phosphoserine.

This sequence belongs to the protein kinase superfamily. Ser/Thr protein kinase family. CDC7 subfamily. Heterodimer with the regulatory subunit him1/dfp1. May form homooligomeric complexes. Interacts with mcm10. In terms of processing, autophosphorylated. Phosphorylated by cds1 in vitro.

The protein localises to the nucleus. The enzyme catalyses L-seryl-[protein] + ATP = O-phospho-L-seryl-[protein] + ADP + H(+). The catalysed reaction is L-threonyl-[protein] + ATP = O-phospho-L-threonyl-[protein] + ADP + H(+). Its activity is regulated as follows. Phosphorylation of exogenous substrates activated by Dfp1. Its function is as follows. Required for G1/S transition. Plays a role in DNA replication checkpoint signaling through regulating rad3 and cds1. Involved in the maintenance of mitotic chromosome structures during S phase through regulating the function of rad21. Required for initiation of mitotic DNA replication through phosphorylating mcm2/cdc19. Required for genome integrity. The chain is Cell cycle serine/threonine-protein kinase hsk1 (hsk1) from Schizosaccharomyces pombe (strain 972 / ATCC 24843) (Fission yeast).